A 58-amino-acid chain; its full sequence is Small ribosomal subunit protein eS31 (58 aa).

Residues cysteine 29, cysteine 32, cysteine 48, and cysteine 51 each coordinate Zn(2+). The segment at 29–51 (CPRCGSFMAHHLKPVPRWHCGKC) adopts a C4-type zinc-finger fold.

This sequence belongs to the eukaryotic ribosomal protein eS31 family. In terms of assembly, part of the 30S ribosomal subunit. Zn(2+) is required as a cofactor.

This is Small ribosomal subunit protein eS31 from Ignicoccus hospitalis (strain KIN4/I / DSM 18386 / JCM 14125).